The sequence spans 501 residues: Aerobic glycerol-3-phosphate dehydrogenase (501 aa).

Residue 5–33 coordinates FAD; that stretch reads DLIVIGGGINGAGIAADAAGRGLSVLMLE.

This sequence belongs to the FAD-dependent glycerol-3-phosphate dehydrogenase family. It depends on FAD as a cofactor.

It is found in the cytoplasm. It catalyses the reaction a quinone + sn-glycerol 3-phosphate = dihydroxyacetone phosphate + a quinol. It participates in polyol metabolism; glycerol degradation via glycerol kinase pathway; glycerone phosphate from sn-glycerol 3-phosphate (aerobic route): step 1/1. Conversion of glycerol 3-phosphate to dihydroxyacetone. Uses molecular oxygen or nitrate as electron acceptor. In Escherichia coli (strain K12), this protein is Aerobic glycerol-3-phosphate dehydrogenase (glpD).